Reading from the N-terminus, the 1574-residue chain is Centrosomal protein of 170 kDa protein B (1574 aa).

The region spanning 23 to 73 (IFVGRDECELMLQSRSVDKQHAVINYDQDRDEHWVKDLGSLNGTFVNDVRI) is the FHA domain. Disordered stretches follow at residues 121–258 (VSVK…GVGG), 316–395 (DWLV…RDPQ), and 409–578 (FDGD…QDQE). Composition is skewed to basic and acidic residues over residues 147-157 (RPEKGDRRHGA), 182-197 (SEDR…RPKD), and 325-344 (LLRR…DLPV). At Ser-360 the chain carries Phosphoserine. Residues 370–382 (ASVSGASAEASGE) are compositionally biased toward low complexity. The residue at position 421 (Ser-421) is a Phosphoserine. Residues 430-446 (PKADKRRGPGTSDRDRP) show a composition bias toward basic and acidic residues. A compositionally biased stretch (polar residues) spans 452-463 (ATGSSSGPQRAS). Positions 465–474 (LKREKTEERL) are enriched in basic and acidic residues. Positions 475–488 (GNTSPVPRASTRSF) are enriched in polar residues. Ser-478 and Ser-490 each carry phosphoserine. The segment covering 518–528 (EKTPPVLPAPL) has biased composition (pro residues). Ser-534 is subject to Phosphoserine. Residues Thr-540 and Thr-541 each carry the phosphothreonine modification. Ser-595, Ser-617, Ser-653, Ser-709, Ser-744, Ser-746, Ser-749, Ser-751, Ser-819, and Ser-843 each carry phosphoserine. 6 disordered regions span residues 637-826 (PGMA…RDGL), 839-882 (RSGR…HISS), 924-1300 (SKSA…DPYG), 1333-1358 (AGDG…NTPA), 1377-1407 (NFQK…TNKT), and 1510-1535 (NRAP…TSPA). Over residues 857-867 (FARQESFTKEP) the composition is skewed to polar residues. At Ser-947 the chain carries Phosphoserine. Positions 950 to 959 (DTASTISLLS) are enriched in polar residues. 2 positions are modified to phosphoserine: Ser-965 and Ser-981. Positions 996 to 1005 (ARERMSERQH) are enriched in basic and acidic residues. Residues 1084–1102 (RSSATAQKVQQALTRSNSL) show a composition bias toward polar residues. Phosphoserine is present on Ser-1122. Low complexity predominate over residues 1134-1146 (AANPEPANRAAPE). Phosphoserine is present on residues Ser-1166 and Ser-1186. A compositionally biased stretch (low complexity) spans 1199-1213 (AEARAAAKKAAATAA). Polar residues predominate over residues 1265-1282 (HASTATQTPRGSSSTRAR). Residue Thr-1289 is modified to Phosphothreonine. Ser-1341 carries the post-translational modification Phosphoserine. Composition is skewed to polar residues over residues 1344–1358 (PTRS…NTPA) and 1385–1396 (SMNSHNLDQNMN). At Thr-1345 the chain carries Phosphothreonine. Ser-1347 is subject to Phosphoserine. Phosphoserine is present on residues Ser-1530 and Ser-1533.

This sequence belongs to the CEP170 family.

The protein resides in the cytoplasm. It is found in the cytoskeleton. Its function is as follows. Plays a role in microtubule organization. This is Centrosomal protein of 170 kDa protein B (Cep170b) from Mus musculus (Mouse).